We begin with the raw amino-acid sequence, 87 residues long: Mu-conotoxin cal12b (87 aa).

Positions 1–19 (MKLTCVLVVLLLLLPYGDL) are cleaved as a signal peptide. Residues 20 to 42 (ITNNYIRGAARKVTPWRRNLKTR) constitute a propeptide that is removed on maturation. Disulfide bonds link Cys-45-Cys-58, Cys-53-Cys-70, Cys-60-Cys-75, and Cys-69-Cys-81. Trp-59 bears the 6'-bromotryptophan mark. Pro-65 is subject to 4-hydroxyproline. Trp-79 and Trp-80 each carry 6'-bromotryptophan. Pro-82 is modified (4-hydroxyproline). Trp-86 is subject to 6'-bromotryptophan.

Expressed by the venom duct.

The protein localises to the secreted. In terms of biological role, mu-conotoxins block voltage-gated sodium channels. This toxin reversibly blocks voltage-gated sodium channel in cephalopods (tested on squid giant-fiber-lobe neurons) with an inhibitor constant (Ki) of 15 nmol/l, with no alteration in the voltage dependence of sodium conductance or on the kinetics of inactivation. Has no effect on sodium channels of the two gastropod S.luhuanus and A.californica (which are not natural prey). The chain is Mu-conotoxin cal12b from Californiconus californicus (California cone).